Reading from the N-terminus, the 424-residue chain is UPF0229 protein PputGB1_0427 (424 aa).

Residues 81–107 are disordered; sequence EFTAGEHIPRPQGGGGGGGGRGKAGNS. Residues 92–107 are compositionally biased toward gly residues; sequence QGGGGGGGGRGKAGNS.

Belongs to the UPF0229 family.

The sequence is that of UPF0229 protein PputGB1_0427 from Pseudomonas putida (strain GB-1).